We begin with the raw amino-acid sequence, 611 residues long: Dihydroxy-acid dehydratase (611 aa).

Asp-81 serves as a coordination point for Mg(2+). Residue Cys-122 coordinates [2Fe-2S] cluster. Asp-123 and Lys-124 together coordinate Mg(2+). Lys-124 carries the post-translational modification N6-carboxylysine. Residue Cys-195 participates in [2Fe-2S] cluster binding. Residue Glu-491 participates in Mg(2+) binding. Ser-517 functions as the Proton acceptor in the catalytic mechanism.

It belongs to the IlvD/Edd family. Homodimer. [2Fe-2S] cluster serves as cofactor. It depends on Mg(2+) as a cofactor.

The catalysed reaction is (2R)-2,3-dihydroxy-3-methylbutanoate = 3-methyl-2-oxobutanoate + H2O. The enzyme catalyses (2R,3R)-2,3-dihydroxy-3-methylpentanoate = (S)-3-methyl-2-oxopentanoate + H2O. Its pathway is amino-acid biosynthesis; L-isoleucine biosynthesis; L-isoleucine from 2-oxobutanoate: step 3/4. The protein operates within amino-acid biosynthesis; L-valine biosynthesis; L-valine from pyruvate: step 3/4. Functionally, functions in the biosynthesis of branched-chain amino acids. Catalyzes the dehydration of (2R,3R)-2,3-dihydroxy-3-methylpentanoate (2,3-dihydroxy-3-methylvalerate) into 2-oxo-3-methylpentanoate (2-oxo-3-methylvalerate) and of (2R)-2,3-dihydroxy-3-methylbutanoate (2,3-dihydroxyisovalerate) into 2-oxo-3-methylbutanoate (2-oxoisovalerate), the penultimate precursor to L-isoleucine and L-valine, respectively. In Brucella suis (strain ATCC 23445 / NCTC 10510), this protein is Dihydroxy-acid dehydratase.